We begin with the raw amino-acid sequence, 226 residues long: 2-C-methyl-D-erythritol 4-phosphate cytidylyltransferase (226 aa).

Belongs to the IspD/TarI cytidylyltransferase family. IspD subfamily.

The enzyme catalyses 2-C-methyl-D-erythritol 4-phosphate + CTP + H(+) = 4-CDP-2-C-methyl-D-erythritol + diphosphate. It participates in isoprenoid biosynthesis; isopentenyl diphosphate biosynthesis via DXP pathway; isopentenyl diphosphate from 1-deoxy-D-xylulose 5-phosphate: step 2/6. Functionally, catalyzes the formation of 4-diphosphocytidyl-2-C-methyl-D-erythritol from CTP and 2-C-methyl-D-erythritol 4-phosphate (MEP). The sequence is that of 2-C-methyl-D-erythritol 4-phosphate cytidylyltransferase from Parasynechococcus marenigrum (strain WH8102).